Consider the following 253-residue polypeptide: Uracil-DNA glycosylase (253 aa).

Asp79 acts as the Proton acceptor in catalysis.

The protein belongs to the uracil-DNA glycosylase (UDG) superfamily. UNG family.

The protein localises to the cytoplasm. It carries out the reaction Hydrolyzes single-stranded DNA or mismatched double-stranded DNA and polynucleotides, releasing free uracil.. In terms of biological role, excises uracil residues from the DNA which can arise as a result of misincorporation of dUMP residues by DNA polymerase or due to deamination of cytosine. The protein is Uracil-DNA glycosylase of Xylella fastidiosa (strain 9a5c).